We begin with the raw amino-acid sequence, 486 residues long: Keratin, type II cuticular Hb6 (486 aa).

Positions 1–106 (MTCGSYCGGR…PNAQCVKHEE (106 aa)) are head. The IF rod domain maps to 106 to 417 (EKEQIKCLNS…RLLEGEEQRL (312 aa)). Positions 107–141 (KEQIKCLNSKFAAFIDKVRFLEQQNKLLETKWQFY) are coil 1A. Positions 142-151 (QNRKCCESNM) are linker 1. Residues 152–252 (EPLFEGYIEA…YDEETRILHS (101 aa)) form a coil 1B region. Lys-212 is covalently cross-linked (Glycyl lysine isopeptide (Lys-Gly) (interchain with G-Cter in SUMO1)). Residues 253-269 (HISDTSIVVKMDNSRDL) form a linker 12 region. The segment at 270-413 (NMDCVVAEIK…TTYRRLLEGE (144 aa)) is coil 2. The segment at 414-486 (EQRLCEGVGS…GACSGGCKKC (73 aa)) is tail.

Belongs to the intermediate filament family. In terms of assembly, heterotetramer of two type I and two type II keratins.

In Mus musculus (Mouse), this protein is Keratin, type II cuticular Hb6 (Krt86).